The chain runs to 78 residues: DNA-directed RNA polymerase subunit omega (78 aa).

Belongs to the RNA polymerase subunit omega family. As to quaternary structure, in cyanobacteria the RNAP catalytic core is composed of 2 alpha, 1 beta, 1 beta', 1 gamma and 1 omega subunit. When a sigma factor is associated with the core the holoenzyme is formed, which can initiate transcription.

The catalysed reaction is RNA(n) + a ribonucleoside 5'-triphosphate = RNA(n+1) + diphosphate. Promotes RNA polymerase assembly. Latches the N- and C-terminal regions of the beta' subunit thereby facilitating its interaction with the beta and alpha subunits. This Prochlorococcus marinus (strain MIT 9301) protein is DNA-directed RNA polymerase subunit omega.